Reading from the N-terminus, the 400-residue chain is MTIRQSSVQYVPYFNNRIKYARIPYIIKEFLENIICGIDIEKNVENINYLLDINMYVQNPEFYNNGYDDLNTFLEISENTYFGQSFIEDMELSTKIDELYKKNNTNHIVNKIMGLPLETNIIEKIIKKYYDTYQHKFSIDNNHGLTNLYNINPFREITTNNDLLNIIDIVKTTDKKYQTPIREYTGGKHIWINCYCQLINLGLEEHNESTQFIKNPDNIVEIAKNMNHVFNELYFNYQYINIIDNIFKNEFEVISSQTFLYYCDPTGQTNIVDNLNIGIGSVIFIPNHLSTSYGSFKTFKEFISPTKVIYKIKITNYPNKGKNWIFIDTYSRVQEEKEILIRANSYYVIEDIDYVLIEFNHDDFDNVSEPYVVKVIVMRLFDDVTSAVIYSTKLNTVVND.

One can recognise a TR mART core domain in the interval 161-380; it reads NDLLNIIDIV…YVVKVIVMRL (220 aa).

This is an uncharacterized protein from Acanthamoeba polyphaga (Amoeba).